Here is a 182-residue protein sequence, read N- to C-terminus: uncharacterized protein (182 aa).

The protein localises to the plastid. It is found in the cyanelle. This is an uncharacterized protein from Cyanophora paradoxa.